Consider the following 294-residue polypeptide: Autophagy protein 5 (294 aa).

A Glycyl lysine isopeptide (Lys-Gly) (interchain with G-Cter in ATG12) cross-link involves residue Lys-149.

This sequence belongs to the ATG5 family. As to quaternary structure, conjugated with ATG12. The ATG5-ATG12 conjugate forms a complex with several units of ATG16. The ATG12-ATG5 conjugate also associates with ATG3. In terms of processing, conjugated to ATG12; which is essential for autophagy. Conjugation with ATG12 involves ATG7 as an E1-like activating enzyme and ATG10 as an E2-like conjugating enzyme.

It localises to the preautophagosomal structure membrane. In terms of biological role, involved in cytoplasm to vacuole transport (Cvt) and autophagic vesicle formation. Autophagy is essential for maintenance of amino acid levels and protein synthesis under nitrogen starvation. Required for selective autophagic degradation of the nucleus (nucleophagy). Also required for mitophagy, which eliminates defective or superfluous mitochondria in order to fulfill cellular energy requirements and prevent excess ROS production. Conjugation with ATG12, through a ubiquitin-like conjugating system involving ATG7 as an E1-like activating enzyme and ATG10 as an E2-like conjugating enzyme, is essential for its function. The ATG12-ATG5 conjugate acts as an E3-like enzyme which is required for lipidation of ATG8 and ATG8 association to the vesicle membranes. ATG12-ATG5 rearranges the ATG3 catalytic center and enhances its E2 activity. Plays a role in the regulation of filamentous growth and chronological longevity. This Saccharomyces cerevisiae (strain YJM789) (Baker's yeast) protein is Autophagy protein 5 (ATG5).